The chain runs to 217 residues: Oxygen regulatory protein NreC (217 aa).

Positions 2–119 (KIVIADDHAV…QLISAVRTVY (118 aa)) constitute a Response regulatory domain. Asp-53 carries the post-translational modification 4-aspartylphosphate. The 66-residue stretch at 148-213 (TNDPFRILSK…ELVEYALKKK (66 aa)) folds into the HTH luxR-type domain. The H-T-H motif DNA-binding region spans 172–191 (NKEIAEKLFVSVKTVEAHKT).

Phosphorylated by NreB.

Its subcellular location is the cytoplasm. Its function is as follows. Member of the two-component regulatory system NreB/NreC involved in the control of dissimilatory nitrate/nitrite reduction in response to oxygen. Phosphorylated NreC binds to a GC-rich palindromic sequence at the promoters of the nitrate (narGHJI) and nitrite (nir) reductase operons, as well as the putative nitrate transporter gene narT, and activates their expression. The chain is Oxygen regulatory protein NreC (nreC) from Staphylococcus carnosus (strain TM300).